The following is a 342-amino-acid chain: Cytoplasmic tRNA 2-thiolation protein 1 (342 aa).

Belongs to the TtcA family. CTU1/NCS6/ATPBD3 subfamily.

The protein resides in the cytoplasm. It participates in tRNA modification; 5-methoxycarbonylmethyl-2-thiouridine-tRNA biosynthesis. Functionally, plays a central role in 2-thiolation of mcm(5)S(2)U at tRNA wobble positions of tRNA(Lys), tRNA(Glu) and tRNA(Gln). Directly binds tRNAs and probably acts by catalyzing adenylation of tRNAs, an intermediate required for 2-thiolation. It is unclear whether it acts as a sulfurtransferase that transfers sulfur from thiocarboxylated URM1 onto the uridine of tRNAs at wobble position. This chain is Cytoplasmic tRNA 2-thiolation protein 1, found in Anopheles gambiae (African malaria mosquito).